Consider the following 831-residue polypeptide: AMP deaminase (831 aa).

Disordered regions lie at residues 26–45, 66–110, and 130–149; these read NPGANRDEEVAAAPSSQDTP, NGTQ…KLLN, and NAVVSSVGGPETDPGNMETT. Phosphoserine is present on residues Ser79 and Ser84. Zn(2+)-binding residues include His319 and His321. Substrate-binding positions include His321 and 390–395; that span reads KFNLKY. His587 is a binding site for Zn(2+). Substrate is bound at residue Glu590. Residue His609 is the Proton acceptor of the active site. A Zn(2+)-binding site is contributed by Asp664. Substrate is bound at residue 665–668; sequence DPLQ. Residues Ser758, Ser776, Ser780, and Ser782 each carry the phosphoserine modification.

This sequence belongs to the metallo-dependent hydrolases superfamily. Adenosine and AMP deaminases family. Homotetramer. It depends on Zn(2+) as a cofactor.

The protein localises to the cytoplasm. It carries out the reaction AMP + H2O + H(+) = IMP + NH4(+). It functions in the pathway purine metabolism; IMP biosynthesis via salvage pathway; IMP from AMP: step 1/1. In terms of biological role, AMP deaminase plays a critical role in energy metabolism. The chain is AMP deaminase (ada1) from Schizosaccharomyces pombe (strain 972 / ATCC 24843) (Fission yeast).